Reading from the N-terminus, the 559-residue chain is Polypeptide N-acetylgalactosaminyltransferase 1 (559 aa).

Residues 1-8 are Cytoplasmic-facing; that stretch reads MRKFAYCK. Residues 9–28 traverse the membrane as a helical; Signal-anchor for type II membrane protein segment; sequence VVLATSLVWVLLDMFLLLYF. Topologically, residues 29–559 are lumenal; sequence SECNKCEEKK…LRNVTLPEIF (531 aa). Residue Asn95 is glycosylated (N-linked (GlcNAc...) asparagine). Cystine bridges form between Cys106/Cys339, Cys330/Cys408, Cys442/Cys459, Cys482/Cys497, and Cys523/Cys540. The tract at residues 115–225 is catalytic subdomain A; the sequence is LPTTSVVIVF…VGWLEPLLAR (111 aa). 2 residues coordinate substrate: Asp156 and Arg186. Residues Asp209 and His211 each contribute to the Mn(2+) site. Residues 285–347 form a catalytic subdomain B region; sequence PVRTPTMAGG…TCSHVGHVFR (63 aa). Trp316 provides a ligand contact to substrate. His344 is a binding site for Mn(2+). Substrate contacts are provided by Arg347 and Tyr352. The Ricin B-type lectin domain maps to 429–551; it reads FSLGEIRNVE…GSRSQQWLLR (123 aa). Asn552 carries N-linked (GlcNAc...) asparagine glycosylation.

This sequence belongs to the glycosyltransferase 2 family. GalNAc-T subfamily. Mn(2+) serves as cofactor. As to expression, heart, brain, spleen, liver, skeletal muscle and kidney.

The protein resides in the golgi apparatus. It localises to the golgi stack membrane. Its subcellular location is the secreted. The catalysed reaction is L-seryl-[protein] + UDP-N-acetyl-alpha-D-galactosamine = a 3-O-[N-acetyl-alpha-D-galactosaminyl]-L-seryl-[protein] + UDP + H(+). It carries out the reaction L-threonyl-[protein] + UDP-N-acetyl-alpha-D-galactosamine = a 3-O-[N-acetyl-alpha-D-galactosaminyl]-L-threonyl-[protein] + UDP + H(+). It participates in protein modification; protein glycosylation. In terms of biological role, catalyzes the initial reaction in O-linked oligosaccharide biosynthesis, the transfer of an N-acetyl-D-galactosamine residue to a serine or threonine residue on the protein receptor. Has a broad spectrum of substrates such as apomucin-, MUC5AC-, MUC1- and MUC2-derived peptides. The polypeptide is Polypeptide N-acetylgalactosaminyltransferase 1 (Rattus norvegicus (Rat)).